The chain runs to 641 residues: FAD-binding monooxygenase ausB (641 aa).

The interval 1-68 (MAIGPKPESI…DSTTNVPYSL (68 aa)) is disordered. The span at 49–68 (WLTSTDQPQPDSTTNVPYSL) shows a compositional bias: polar residues. FAD-binding positions include 115-118 (TWYW), 127-128 (DI), and Y133. Residue 125-127 (MCD) coordinates NADP(+). NADP(+) is bound by residues 272–278 (TGSTAVQ) and 295–296 (RT).

It belongs to the FAD-binding monooxygenase family. FAD serves as cofactor.

The catalysed reaction is protoaustinoid A + AH2 + O2 = berkeleyone A + A + H2O. It functions in the pathway secondary metabolite biosynthesis; terpenoid biosynthesis. Functionally, FAD-binding monooxygenase; part of the gene cluster A that mediates the biosynthesis of the fungal meroterpenoid acetoxydehydroaustin. The first step of the pathway is the synthesis of 3,5-dimethylorsellinic acid by the polyketide synthase ausA. 3,5-dimethylorsellinic acid is then prenylated by the polyprenyl transferase ausN. Further epoxidation by the FAD-dependent monooxygenase ausM and cyclization by the probable terpene cyclase ausL lead to the formation of protoaustinoid A. Protoaustinoid A is then oxidized to spiro-lactone preaustinoid A3 by the combined action of the FAD-binding monooxygenases ausB and ausC, and the dioxygenase ausE. Acid-catalyzed keto-rearrangement and ring contraction of the tetraketide portion of preaustinoid A3 by ausJ lead to the formation of preaustinoid A4. The aldo-keto reductase ausK, with the help of ausH, is involved in the next step by transforming preaustinoid A4 into isoaustinone which is in turn hydroxylated by the P450 monooxygenase ausI to form austinolide. The cytochrome P450 monooxygenase ausG then modifies austinolide to austinol. Austinol is further acetylated to austin by the O-acetyltransferase ausP, which spontaneously changes to dehydroaustin. The cytochrome P450 monooxygenase then converts dehydroaustin is into 7-dehydrodehydroaustin. The hydroxylation catalyzed by ausR permits the second O-acetyltransferase ausQ to add an additional acetyl group to the molecule, leading to the formation of acetoxydehydroaustin. Due to genetic rearrangements of the clusters and the subsequent loss of some enzymes, the end product of the Penicillium brasilianum austinoid biosynthesis clusters is acetoxydehydroaustin. This chain is FAD-binding monooxygenase ausB, found in Penicillium brasilianum.